Consider the following 83-residue polypeptide: Cell division topological specificity factor (83 aa).

Belongs to the MinE family.

In terms of biological role, prevents the cell division inhibition by proteins MinC and MinD at internal division sites while permitting inhibition at polar sites. This ensures cell division at the proper site by restricting the formation of a division septum at the midpoint of the long axis of the cell. In Marinobacter nauticus (strain ATCC 700491 / DSM 11845 / VT8) (Marinobacter aquaeolei), this protein is Cell division topological specificity factor.